The following is a 320-amino-acid chain: tRNA U34 carboxymethyltransferase (320 aa).

Residues lysine 87, tryptophan 101, lysine 106, glycine 126, 148 to 150, 176 to 177, methionine 192, tyrosine 196, and arginine 311 contribute to the carboxy-S-adenosyl-L-methionine site; these read EPS and VE.

Belongs to the class I-like SAM-binding methyltransferase superfamily. CmoB family. As to quaternary structure, homotetramer.

The catalysed reaction is carboxy-S-adenosyl-L-methionine + 5-hydroxyuridine(34) in tRNA = 5-carboxymethoxyuridine(34) in tRNA + S-adenosyl-L-homocysteine + H(+). Catalyzes carboxymethyl transfer from carboxy-S-adenosyl-L-methionine (Cx-SAM) to 5-hydroxyuridine (ho5U) to form 5-carboxymethoxyuridine (cmo5U) at position 34 in tRNAs. The chain is tRNA U34 carboxymethyltransferase from Desulfotalea psychrophila (strain LSv54 / DSM 12343).